The primary structure comprises 99 residues: CLAVATA3/ESR (CLE)-related protein 17 (99 aa).

Residues 1–21 form the signal peptide; the sequence is MTHVLVRRQGQGKKRRWDVNM. The span at 77-89 shows a compositional bias: basic and acidic residues; it reads LSRDDIYGDDKRV. A disordered region spans residues 77 to 99; it reads LSRDDIYGDDKRVVHTGPNPLHN. Pro-94 is modified (hydroxyproline). Pro-94 is a glycosylation site (O-linked (Ara...) hydroxyproline).

The protein belongs to the CLV3/ESR signal peptide family. In terms of processing, the O-glycosylation (arabinosylation) of the hydroxyproline Pro-94 enhances binding affinity of the CLE17p peptide for its receptor. As to expression, mostly expressed in seedlings, roots, flowers, stems and apex, and, to a lower extent, in leaves and siliques.

The protein resides in the secreted. It is found in the extracellular space. Functionally, extracellular signal peptide that regulates cell fate. Represses root apical meristem maintenance. Regulates the transition of protophloem cells from proliferation to differentiation, thus impinging on postembryonic growth capacity of the root meristem; this signaling pathway requires CRN and CLV2. The chain is CLAVATA3/ESR (CLE)-related protein 17 from Arabidopsis thaliana (Mouse-ear cress).